The chain runs to 296 residues: 4-hydroxy-tetrahydrodipicolinate synthase (296 aa).

Pyruvate is bound at residue threonine 49. Tyrosine 137 functions as the Proton donor/acceptor in the catalytic mechanism. Lysine 166 (schiff-base intermediate with substrate) is an active-site residue. Position 208 (isoleucine 208) interacts with pyruvate.

This sequence belongs to the DapA family. In terms of assembly, homotetramer; dimer of dimers.

The protein resides in the cytoplasm. It catalyses the reaction L-aspartate 4-semialdehyde + pyruvate = (2S,4S)-4-hydroxy-2,3,4,5-tetrahydrodipicolinate + H2O + H(+). Its pathway is amino-acid biosynthesis; L-lysine biosynthesis via DAP pathway; (S)-tetrahydrodipicolinate from L-aspartate: step 3/4. Catalyzes the condensation of (S)-aspartate-beta-semialdehyde [(S)-ASA] and pyruvate to 4-hydroxy-tetrahydrodipicolinate (HTPA). The chain is 4-hydroxy-tetrahydrodipicolinate synthase from Chlorobium phaeobacteroides (strain DSM 266 / SMG 266 / 2430).